The primary structure comprises 179 residues: Macro domain-containing protein XCC3184 (179 aa).

Residues 1 to 175 (MRIEVWQGDI…AYHQALATQE (175 aa)) form the Macro domain.

This sequence belongs to the MacroD-type family.

In Xanthomonas campestris pv. campestris (strain ATCC 33913 / DSM 3586 / NCPPB 528 / LMG 568 / P 25), this protein is Macro domain-containing protein XCC3184.